The sequence spans 459 residues: DNA-binding protein P3A2 (459 aa).

The disordered stretch occupies residues 1–25; sequence MMISEDISEPSSPDTPFDDSDLLNS.

It belongs to the NRF1/Ewg family.

The protein resides in the nucleus. Functionally, transcriptional regulator that interacts with specific sites in the control region of the cyIIIa actin gene. Also binds specifically to similar target sites located in the regulatory region of the SM50 gene. In Strongylocentrotus purpuratus (Purple sea urchin), this protein is DNA-binding protein P3A2.